Consider the following 374-residue polypeptide: Muconate cycloisomerase 1 (374 aa).

It belongs to the cycloisomerase 2 family. As to quaternary structure, homotetramer.

The enzyme catalyses (S)-muconolactone = cis,cis-muconate + H(+). The protein operates within aromatic compound metabolism; beta-ketoadipate pathway; 5-oxo-4,5-dihydro-2-furylacetate from catechol: step 2/3. Functionally, catalyzes a syn cycloisomerization. In Cutaneotrichosporon cutaneum (Yeast), this protein is Muconate cycloisomerase 1.